Reading from the N-terminus, the 252-residue chain is Neurovirulence factor ICP34.5 (252 aa).

Residues 1-15 (MARRRRRHRGPRRPR) show a composition bias toward basic residues. The interval 1–17 (MARRRRRHRGPRRPRPP) is required for nucleolar localization. Disordered stretches follow at residues 1–129 (MARR…PFRL) and 150–179 (RRAG…PATP). The segment covering 25–36 (TAQSQVTSTPNS) has biased composition (polar residues). Residues 46–59 (AAPPPPPAGGPPPS) show a composition bias toward pro residues. The segment covering 74–84 (ASDDDDDDDWP) has biased composition (acidic residues). 2 stretches are compositionally biased toward pro residues: residues 85-94 (DSPPPEPAPE) and 120-129 (SHPPSRPFRL). The Nuclear export signal motif lies at 129-138 (LPPRLALRLR). Repeat copies occupy residues 162–164 (ATP), 165–167 (ATP), 168–170 (ATP), 171–173 (ATP), 174–176 (ATP), and 177–179 (ATP). Residues 162–179 (ATPATPATPATPATPATP) are 6 X 3 AA tandem repeats of A-T-P. Low complexity predominate over residues 165–179 (ATPATPATPATPATP). The interval 179-192 (PARVRFSPHVRVRH) is binding to PP1CA. Residues 179 to 192 (PARVRFSPHVRVRH) form an interaction with host PPP1CA region. Residues 194 to 252 (VVWASAARLARRGSWARERADRARFRRRVAEAEAVIGPCLGPKARARALARGAGPANSV) are important for interferon resistance. The Bipartite nuclear localization signal motif lies at 204–222 (RRGSWARERADRARFRRRV). Residues 222–237 (VAEAEAVIGPCLGPKA) are interaction with host EIF2S1/EIF-2ALPHA.

Belongs to the PPP1R15 family. As to quaternary structure, interacts with host PPP1CA to form a high-molecular-weight complex that dephosphorylates EIF2S1/eIF-2alpha. Interacts with host EIF2S1/eIF-2alpha; this interaction is crucial for the specific dephosphorylation of EIF2S1/eIF-2alpha by PPP1CA. Binds to proliferating cell nuclear antigen (PCNA), which may release host cells from growth arrest and facilitate viral replication. Interacts (via N-terminus) with host C1QBP and PRKCA. Interacts with protein UL31. Interacts with host TBK1. Interacts with host STING/TMEM173; this interaction inhibits the intracellular DNA sensing pathway. Interacts with host BECN1; this interaction modulates host autophagy.

The protein localises to the host cytoplasm. It is found in the host nucleus. Its subcellular location is the host nucleolus. It localises to the virion. In terms of biological role, inhibits the establishment of the immune response and of the integrated stress response (ISR) in the infected cell. Plays essential roles in viral nuclear egress to mediate capsid transit across the nuclear membrane. Facilitates nuclear egress cooperatively with host C1QBP and protein kinase C/PKC to induce lamin A/C phosphorylation and subsequent reorganization. In turn, lamina disassembles and nuclear egress occurs. Recruits the serine/threonine protein phosphatase PPP1CA/PP1-alpha to dephosphorylate the translation initiation factor EIF2S1/eIF-2alpha, thereby couteracting the host shutoff of protein synthesis involving double-stranded RNA-dependent protein kinase EIF2AK2/PKR. In turn, controls host IRF3 activation and subsequently inhibits host interferon response. Controls the DNA sensing pathway by interacting with and inhibiting host STING/TMEM173. Also down-modulates the host MHC class II proteins cell surface expression. Acts as a neurovirulence factor that has a profound effect on the growth of the virus in central nervous system tissue, by interacting with host BECN1 and thereby antagonizing the host autophagy response. The sequence is that of Neurovirulence factor ICP34.5 (RL1) from Human herpesvirus 1 (strain CVG-2) (HHV-1).